Reading from the N-terminus, the 428-residue chain is GTPase Obg (428 aa).

Residues 1 to 158 form the Obg domain; the sequence is MFIDEVIITV…IKVKLELKLL (158 aa). One can recognise an OBG-type G domain in the interval 159–330; the sequence is ADVALVGYPS…ILYKTYDMLS (172 aa). GTP is bound by residues 165-172, 190-194, 212-215, 282-285, and 311-313; these read GYPSVGKS, FTTLE, DIPG, NKMD, and SVL. 2 residues coordinate Mg(2+): serine 172 and threonine 192. Residues 349 to 428 form the OCT domain; sequence ELKIEKEDFE…IADVEFEYFE (80 aa).

The protein belongs to the TRAFAC class OBG-HflX-like GTPase superfamily. OBG GTPase family. Monomer. Mg(2+) serves as cofactor.

Its subcellular location is the cytoplasm. An essential GTPase which binds GTP, GDP and possibly (p)ppGpp with moderate affinity, with high nucleotide exchange rates and a fairly low GTP hydrolysis rate. Plays a role in control of the cell cycle, stress response, ribosome biogenesis and in those bacteria that undergo differentiation, in morphogenesis control. This chain is GTPase Obg, found in Fusobacterium nucleatum subsp. nucleatum (strain ATCC 25586 / DSM 15643 / BCRC 10681 / CIP 101130 / JCM 8532 / KCTC 2640 / LMG 13131 / VPI 4355).